Here is a 272-residue protein sequence, read N- to C-terminus: Tryptophan synthase alpha chain (272 aa).

Residues glutamate 49 and glutamate 60 each act as proton acceptor in the active site.

This sequence belongs to the TrpA family. As to quaternary structure, tetramer of two alpha and two beta chains.

It carries out the reaction (1S,2R)-1-C-(indol-3-yl)glycerol 3-phosphate + L-serine = D-glyceraldehyde 3-phosphate + L-tryptophan + H2O. The protein operates within amino-acid biosynthesis; L-tryptophan biosynthesis; L-tryptophan from chorismate: step 5/5. The alpha subunit is responsible for the aldol cleavage of indoleglycerol phosphate to indole and glyceraldehyde 3-phosphate. This chain is Tryptophan synthase alpha chain, found in Legionella pneumophila (strain Lens).